A 241-amino-acid polypeptide reads, in one-letter code: Uracil-DNA glycosylase (241 aa).

The Proton acceptor role is filled by Asp-68.

This sequence belongs to the uracil-DNA glycosylase (UDG) superfamily. UNG family.

Its subcellular location is the cytoplasm. The enzyme catalyses Hydrolyzes single-stranded DNA or mismatched double-stranded DNA and polynucleotides, releasing free uracil.. Its function is as follows. Excises uracil residues from the DNA which can arise as a result of misincorporation of dUMP residues by DNA polymerase or due to deamination of cytosine. This is Uracil-DNA glycosylase from Rhizobium meliloti (strain 1021) (Ensifer meliloti).